Here is a 321-residue protein sequence, read N- to C-terminus: Phospholipid phosphatase-related protein type 5 (321 aa).

6 consecutive transmembrane segments (helical) span residues 10–30 (SSML…AYYF), 62–82 (AVPP…VIIV), 122–142 (FLGI…AGQV), 196–213 (AALS…ITNT), 225–245 (VLCL…VAEY), and 252–272 (VIAG…CVVN).

It belongs to the PA-phosphatase related phosphoesterase family. In terms of tissue distribution, isoform 1 is expressed in brain, lung, kidney and colon. Isoform 2 is expressed in placenta, skeletal muscle and kidney.

The protein resides in the cell membrane. Its function is as follows. Induces filopodia formation and promotes neurite growth in a CDC42-independent manner; impedes neurite growth inhibitory-mediated axonal retraction. The polypeptide is Phospholipid phosphatase-related protein type 5 (Homo sapiens (Human)).